Consider the following 90-residue polypeptide: Small ribosomal subunit protein uS15c (90 aa).

Belongs to the universal ribosomal protein uS15 family. Part of the 30S ribosomal subunit.

It localises to the plastid. It is found in the chloroplast. The chain is Small ribosomal subunit protein uS15c (rps15) from Nandina domestica (Heavenly bamboo).